A 296-amino-acid polypeptide reads, in one-letter code: MNHVGRKCSMSAIVGTTNAGKSTLVNVLVGQKVAAVTPKVQTTRVRMHAVSNHENVQLIFIDTPGIFSPKTKLEKFLVKHAWMSLKGIENVIVLVDVKNYLNQHLKKIIDRIKHSNLNAILVLNKIDIVHQSIVSEVIEYMYSLYKFSKAFTISALYGIGIDKLVDYLCETSPYGPWLYNDDQISDAPLKFFMAEITREKLFITLRHELPYSLSVVTELVEEKEDNSLIIKQVIYVTKDSHKTIILGKKGEMVKKISMESKSDLENILQVKVHLFLFVKVREFWQNHLNECVGYAE.

In terms of domain architecture, Era-type G spans 7–174 (KCSMSAIVGT…VDYLCETSPY (168 aa)). The segment at 15–22 (GTTNAGKS) is G1. 15 to 22 (GTTNAGKS) contributes to the GTP binding site. The segment at 41–45 (QTTRV) is G2. Residues 62-65 (DTPG) are G3. Residues 62-66 (DTPGI) and 124-127 (NKID) each bind GTP. Positions 124–127 (NKID) are G4. The G5 stretch occupies residues 153 to 155 (ISA). Residues 205 to 282 (LRHELPYSLS…HLFLFVKVRE (78 aa)) form the KH type-2 domain.

It belongs to the TRAFAC class TrmE-Era-EngA-EngB-Septin-like GTPase superfamily. Era GTPase family. In terms of assembly, monomer.

It localises to the cytoplasm. Its subcellular location is the cell inner membrane. Functionally, an essential GTPase that binds both GDP and GTP, with rapid nucleotide exchange. Plays a role in 16S rRNA processing and 30S ribosomal subunit biogenesis and possibly also in cell cycle regulation and energy metabolism. The chain is GTPase Era from Ehrlichia ruminantium (strain Gardel).